Reading from the N-terminus, the 183-residue chain is Protein Syd (183 aa).

Belongs to the Syd family.

Its subcellular location is the cell inner membrane. Functionally, interacts with the SecY protein in vivo. May bind preferentially to an uncomplexed state of SecY, thus functioning either as a chelating agent for excess SecY in the cell or as a regulatory factor that negatively controls the translocase function. This is Protein Syd from Yersinia pestis bv. Antiqua (strain Antiqua).